The sequence spans 624 residues: Hemocyanin E chain (624 aa).

Cu cation-binding residues include histidine 169, histidine 173, histidine 200, histidine 320, histidine 324, and histidine 360. N-linked (GlcNAc...) asparagine glycosylation occurs at asparagine 445. Residues cysteine 529 and cysteine 577 are joined by a disulfide bond.

It belongs to the tyrosinase family. Hemocyanin subfamily. As to quaternary structure, tarantula hemocyanin is a 24-chain polymer with seven different chains identified. Hemolymph.

The protein resides in the secreted. Its subcellular location is the extracellular space. Functionally, hemocyanins are copper-containing oxygen carriers occurring freely dissolved in the hemolymph of many mollusks and arthropods. This Aphonopelma sp. (American tarantula) protein is Hemocyanin E chain (HCE).